Consider the following 45-residue polypeptide: Movement protein P3a (45 aa).

The chain crosses the membrane as a helical span at residues phenylalanine 9–leucine 29.

Belongs to the polerovirus movement protein P3a family. In terms of assembly, homodimer. Heterodimer with movement protein P17.

It localises to the host cell junction. The protein localises to the host plasmodesma. Its subcellular location is the host Golgi apparatus. The protein resides in the host chloroplast envelope. It is found in the host mitochondrion outer membrane. Its function is as follows. Together with movement protein P17, plays an essential role in virus long distance movement. The chain is Movement protein P3a (ORF3a) from Solanum tuberosum (Potato).